Here is a 601-residue protein sequence, read N- to C-terminus: Ubiquitin carboxyl-terminal hydrolase MINDY-2 (601 aa).

The segment at 1–205 (MENSPDSPQP…LCKEEEEDPA (205 aa)) is disordered. The segment covering 24-34 (EGRRRGGREAE) has biased composition (basic and acidic residues). Threonine 62 carries the post-translational modification Phosphothreonine. Serine 82 carries the phosphoserine modification. Low complexity-rich tracts occupy residues 127-141 (EEPSSTGAPSSSCSE), 148-169 (SPSLDSLESFSNLHSFPSSSEF), and 186-195 (GAAGPPRAAP). The active-site Nucleophile is the cysteine 244. Catalysis depends on histidine 426, which acts as the Proton acceptor. A ubiquitin-binding domain (UBD) region spans residues 485 to 537 (GQQDQIDQDYLMALSLQQEQQSQEINWEQIPEGISDLELAKKLQEEEDRRASQ). The tract at residues 534 to 601 (RASQYYQEQE…EKEKNSCVIL (68 aa)) is disordered. Residues 536 to 570 (SQYYQEQEQAQAVVTTTTPSTQAQQGQPAQASPSS) show a composition bias toward low complexity. Positions 577 to 601 (SERKRKEPREKDKEKEKEKNSCVIL) are enriched in basic and acidic residues.

Belongs to the MINDY deubiquitinase family. FAM63 subfamily.

The enzyme catalyses Thiol-dependent hydrolysis of ester, thioester, amide, peptide and isopeptide bonds formed by the C-terminal Gly of ubiquitin (a 76-residue protein attached to proteins as an intracellular targeting signal).. In terms of biological role, hydrolase that can remove 'Lys-48'-linked conjugated ubiquitin from proteins. Can also bind to polyubiquitin chains of different linkage types, including 'Lys-6', 'Lys-11', 'Lys-29', 'Lys-33' and 'Lys-63'. May play a regulatory role at the level of protein turnover. The chain is Ubiquitin carboxyl-terminal hydrolase MINDY-2 (Mindy2) from Mus musculus (Mouse).